A 323-amino-acid polypeptide reads, in one-letter code: Transcription factor MafB (323 aa).

Lysine 32 is covalently cross-linked (Glycyl lysine isopeptide (Lys-Gly) (interchain with G-Cter in SUMO)). Residues 34-43 (EPLGRAERPG) show a composition bias toward basic and acidic residues. Disordered regions lie at residues 34 to 78 (EPLG…PTEQ) and 116 to 210 (PVPQ…VEDR). Low complexity predominate over residues 54-76 (SLSSTPLSTPCSSVPSSPSFSPT). Composition is skewed to basic residues over residues 129–143 (GAHH…HPHH) and 159–168 (AHPHHHHHHQ). Residues 192–201 (PHATASATAA) are compositionally biased toward low complexity. The segment at 238–263 (RLKQKRRTLKNRGYAQSCRYKRVQQK) is basic motif. In terms of domain architecture, bZIP spans 238–301 (RLKQKRRTLK…DAHKVKCEKL (64 aa)). A leucine-zipper region spans residues 266-287 (LENEKTQLIQQVEQLKQEVSRL). Lysine 297 is covalently cross-linked (Glycyl lysine isopeptide (Lys-Gly) (interchain with G-Cter in SUMO)).

Belongs to the bZIP family. Maf subfamily. As to quaternary structure, homodimer or heterodimer with other bHLH-Zip transcription factors. Binds DNA as a homodimer or a heterodimer. Forms homodimers and heterodimers with FOS, FOSB and FOSL2, but not with JUN proteins (JUN, JUNB and JUND). Interacts with PAX6; the interaction is direct. Interacts with ETS1 and LRP1. Interacts with the intracellular cytoplasmic domain of LRP1 (LRPICD); the interaction results in a moderate reduction of MAFB transcriptional potential. In terms of processing, sumoylated. Sumoylation on Lys-32 and Lys-297 stimulates its transcriptional repression activity and promotes macrophage differentiation from myeloid progenitors.

It localises to the nucleus. In terms of biological role, acts as a transcriptional activator or repressor. Plays a pivotal role in regulating lineage-specific hematopoiesis by repressing ETS1-mediated transcription of erythroid-specific genes in myeloid cells. Required for monocytic, macrophage, osteoclast, podocyte and islet beta cell differentiation. Involved in renal tubule survival and F4/80 maturation. Activates the insulin and glucagon promoters. Together with PAX6, transactivates weakly the glucagon gene promoter through the G1 element. SUMO modification controls its transcriptional activity and ability to specify macrophage fate. Binds element G1 on the glucagon promoter. Involved either as an oncogene or as a tumor suppressor, depending on the cell context. Required for the transcriptional activation of HOXB3 in the rhombomere r5 in the hindbrain. The protein is Transcription factor MafB (MAFB) of Macaca fascicularis (Crab-eating macaque).